A 523-amino-acid polypeptide reads, in one-letter code: Acetyl-coenzyme A carboxylase carboxyl transferase subunit beta, chloroplastic (523 aa).

The region spanning phenylalanine 224–lysine 523 is the CoA carboxyltransferase N-terminal domain. Zn(2+) is bound by residues cysteine 228, cysteine 231, cysteine 247, and cysteine 250. A C4-type zinc finger spans residues cysteine 228–cysteine 250.

This sequence belongs to the AccD/PCCB family. In terms of assembly, acetyl-CoA carboxylase is a heterohexamer composed of biotin carboxyl carrier protein, biotin carboxylase and 2 subunits each of ACCase subunit alpha and ACCase plastid-coded subunit beta (accD). It depends on Zn(2+) as a cofactor.

Its subcellular location is the plastid. The protein localises to the chloroplast stroma. It catalyses the reaction N(6)-carboxybiotinyl-L-lysyl-[protein] + acetyl-CoA = N(6)-biotinyl-L-lysyl-[protein] + malonyl-CoA. Its pathway is lipid metabolism; malonyl-CoA biosynthesis; malonyl-CoA from acetyl-CoA: step 1/1. Component of the acetyl coenzyme A carboxylase (ACC) complex. Biotin carboxylase (BC) catalyzes the carboxylation of biotin on its carrier protein (BCCP) and then the CO(2) group is transferred by the transcarboxylase to acetyl-CoA to form malonyl-CoA. In Cucumis sativus (Cucumber), this protein is Acetyl-coenzyme A carboxylase carboxyl transferase subunit beta, chloroplastic.